The following is an 863-amino-acid chain: DNA replication licensing factor mcm4 (863 aa).

The tract at residues 1 to 121 (MSSPTSTPSR…ARQRPDLGSA (121 aa)) is disordered. Composition is skewed to polar residues over residues 54–64 (SPSGDLQSPSG) and 78–99 (SALQSELDLSSPLTYGTPSSRV). A C4-type zinc finger spans residues 306–331 (CQVCAFTTRVEIDRGRISEPSVCKHC). In terms of domain architecture, MCM spans 458-667 (IYERLASALA…YDRRLAHHLV (210 aa)). 8 residues coordinate ATP: Tyr-471, Arg-497, Lys-516, Ser-517, Asn-618, Arg-643, Arg-732, and Glu-735. The Arginine finger motif lies at 642-645 (SRFD).

Belongs to the MCM family. In terms of assembly, component of the mcm2-7 complex (RLF-M). The complex forms a toroidal hexameric ring with the proposed subunit order mcm2-mcm6-mcm4-mcm7-mcm3-mcm5. The heterodimer of mmcm3/mcm5 interacts with mcm4, mmcm6, mcm7 and weakly with mcm2. Component of the CMG helicase complex, composed of the mcm2-7 complex, the GINS complex and cdc45. In terms of processing, hyperphosphorylated during mitosis in a mechanism requiring cdc2-cyclin B and other kinases. Undergoes dephosphorylation after exiting mitosis, existing in a partially phosphorylated state in the cytosolic interphase mcm complex which associates with the pre-replication complexes (pre-Rcs). Complete dephosphorylation inactivates the mcm complex, preventing its binding to chromatin. Becomes actively phosphorylated during S phase once the mcm complex is assembled on the chromatin. This chromatin-associated phosphorylation occurs during the activation of the pre-Rcs and is independent of cdks. Phosphorylated by the cdc7-dbf4b complex.

It localises to the nucleus. Its subcellular location is the chromosome. The enzyme catalyses ATP + H2O = ADP + phosphate + H(+). Acts as a component of the MCM2-7 complex (MCM complex) which is the replicative helicase essential for 'once per cell cycle' DNA replication initiation and elongation in eukaryotic cells. Core component of CDC45-MCM-GINS (CMG) helicase, the molecular machine that unwinds template DNA during replication, and around which the replisome is built. The active ATPase sites in the MCM2-7 ring are formed through the interaction surfaces of two neighboring subunits such that a critical structure of a conserved arginine finger motif is provided in trans relative to the ATP-binding site of the Walker A box of the adjacent subunit. The six ATPase active sites, however, are likely to contribute differentially to the complex helicase activity. The sequence is that of DNA replication licensing factor mcm4 from Xenopus tropicalis (Western clawed frog).